Consider the following 226-residue polypeptide: X-linked lymphocyte-regulated protein 3C (226 aa).

The disordered stretch occupies residues 1 to 66 (MSSRKRKATD…QARKEKQDLV (66 aa)). Basic and acidic residues predominate over residues 8–18 (ATDTAGRHSRM). The segment covering 21 to 30 (NLSSDDSQNP) has biased composition (polar residues). 2 stretches are compositionally biased toward basic and acidic residues: residues 39-48 (EVLDAGREDI) and 56-66 (QQARKEKQDLV). Positions 155-210 (ESLTLQKNRMEEFKSLCEKYLEKLEVLRDSRGNSIAEELRRLIATLEIKLLMLHNQ) form a coiled coil.

The protein belongs to the XLR/SYCP3 family. In terms of tissue distribution, expressed in lymphoid cells.

This chain is X-linked lymphocyte-regulated protein 3C (Xlr3c), found in Mus musculus (Mouse).